Here is a 339-residue protein sequence, read N- to C-terminus: U11/U12 small nuclear ribonucleoprotein 48 kDa protein (339 aa).

The CHHC U11-48K-type zinc finger occupies 55 to 82 (VVICPYDSNHHMPKSSLAKHMASCRLRK). Zn(2+) contacts are provided by C58, H64, H74, and C78. Residues K87 and K104 each participate in a glycyl lysine isopeptide (Lys-Gly) (interchain with G-Cter in SUMO2) cross-link. The disordered stretch occupies residues 255-339 (HWQEEQEKAE…HSHKRRKQKI (85 aa)). A compositionally biased stretch (basic residues) spans 294-309 (RHRRDRSRSPHKRKRN). Residues 310 to 328 (KDKDKNCESRRRKERDGER) show a composition bias toward basic and acidic residues. Positions 329-339 (HHSHKRRKQKI) are enriched in basic residues.

Component of the U11/U12 snRNPs that are part of the U12-type spliceosome. Not found in the major spliceosome.

The protein resides in the nucleus. Likely involved in U12-type 5' splice site recognition. This is U11/U12 small nuclear ribonucleoprotein 48 kDa protein (SNRNP48) from Homo sapiens (Human).